We begin with the raw amino-acid sequence, 352 residues long: Glutamine synthetase cytosolic isozyme (352 aa).

The region spanning 19-98 (FIAEYIWIDA…VMCDTYTPAG (80 aa)) is the GS beta-grasp domain. Residues 105–352 (KRCNAAKIFS…TSMIAETTIL (248 aa)) enclose the GS catalytic domain.

Belongs to the glutamine synthetase family. As to quaternary structure, homooctamer.

The protein resides in the cytoplasm. The catalysed reaction is L-glutamate + NH4(+) + ATP = L-glutamine + ADP + phosphate + H(+). In Daucus carota (Wild carrot), this protein is Glutamine synthetase cytosolic isozyme (GLN1).